We begin with the raw amino-acid sequence, 97 residues long: Antitoxin YafN (97 aa).

This sequence belongs to the phD/YefM antitoxin family. Probably forms a complex with the mRNA interferase YafO which inhibits the mRNA interferase activity.

Functionally, antitoxin component of a type II toxin-antitoxin (TA) system. Functions as an mRNA interferase antitoxin; overexpression prevents YafO-mediated cessation of cell growth and inhibition of cell proliferation. The polypeptide is Antitoxin YafN (yafN) (Escherichia coli (strain K12)).